The primary structure comprises 280 residues: Acetyl-coenzyme A carboxylase carboxyl transferase subunit beta (280 aa).

In terms of domain architecture, CoA carboxyltransferase N-terminal spans 26–280 (LWQKCPRCGE…TKLLAWHSQK (255 aa)). Zn(2+) is bound by residues C30, C33, C49, and C52. The segment at 30 to 52 (CPRCGEIIFNKELEKNFKVCPKC) adopts a C4-type zinc-finger fold.

The protein belongs to the AccD/PCCB family. As to quaternary structure, acetyl-CoA carboxylase is a heterohexamer composed of biotin carboxyl carrier protein (AccB), biotin carboxylase (AccC) and two subunits each of ACCase subunit alpha (AccA) and ACCase subunit beta (AccD). Zn(2+) serves as cofactor.

The protein resides in the cytoplasm. It catalyses the reaction N(6)-carboxybiotinyl-L-lysyl-[protein] + acetyl-CoA = N(6)-biotinyl-L-lysyl-[protein] + malonyl-CoA. Its pathway is lipid metabolism; malonyl-CoA biosynthesis; malonyl-CoA from acetyl-CoA: step 1/1. In terms of biological role, component of the acetyl coenzyme A carboxylase (ACC) complex. Biotin carboxylase (BC) catalyzes the carboxylation of biotin on its carrier protein (BCCP) and then the CO(2) group is transferred by the transcarboxylase to acetyl-CoA to form malonyl-CoA. The chain is Acetyl-coenzyme A carboxylase carboxyl transferase subunit beta from Carboxydothermus hydrogenoformans (strain ATCC BAA-161 / DSM 6008 / Z-2901).